Here is a 614-residue protein sequence, read N- to C-terminus: Maltose permease MAL31 (614 aa).

Residues 1 to 48 (MKGLSSLINRKKDRNDSHLDEIENGVNATEFNSIEMEEQGKKSDFDLS) are disordered. The Cytoplasmic portion of the chain corresponds to 1–108 (MKGLSSLINR…AAAWSLLVST (108 aa)). The segment covering 38–48 (EQGKKSDFDLS) has biased composition (basic and acidic residues). A helical membrane pass occupies residues 109–129 (TLIQEGYDTAILGAFYALPVF). Residues 130-144 (QKKYGSLNSNTGDYE) are Extracellular-facing. A helical membrane pass occupies residues 145-165 (ISVSWQIGLCLCYMAGEIVGL). The Cytoplasmic portion of the chain corresponds to 166 to 180 (QMTGPSVDYMGNRYT). The chain crosses the membrane as a helical span at residues 181 to 201 (LIMALFFLAAFIFILYFCKSL). Position 202 (Gly-202) is a topological domain, extracellular. Residues 203–223 (MIAVGQALCGMPWGCFQCLTV) form a helical membrane-spanning segment. Residues 224-236 (SYASEICPLALRY) lie on the Cytoplasmic side of the membrane. Residues 237–257 (YLTTYSNLCWAFGQLFAAGIM) form a helical membrane-spanning segment. At 258–272 (KNSQNKYANSELGYK) the chain is on the extracellular side. A helical membrane pass occupies residues 273 to 293 (LPFALQWIWPLPLAVGIFFAP). Residues 294–364 (ESPWWLVKKG…KDGINRRRTR (71 aa)) lie on the Cytoplasmic side of the membrane. Residues 365 to 385 (IACLCWIGQCSCGASLIGYST) form a helical membrane-spanning segment. The Extracellular portion of the chain corresponds to 386-398 (YFYEKAGVSTDTA). The chain crosses the membrane as a helical span at residues 399–419 (FTFSIIQYCLGIAATFISWWA). At 420-427 (SKYCGRFD) the chain is on the cytoplasmic side. Residues 428–448 (LYAFGLAFQAIMFFIIGGLGC) form a helical membrane-spanning segment. Over 449 to 460 (SDTHGAKMGSGA) the chain is Extracellular. Residues 461–481 (LLMVVAFFYNLGIAPVVFCLV) form a helical membrane-spanning segment. Residues 482–493 (SEIPSSRLRTKT) lie on the Cytoplasmic side of the membrane. A helical transmembrane segment spans residues 494–514 (IILARNAYNVIQVVVTVLIMY). At 515 to 526 (QLNSEKWNWGAK) the chain is on the extracellular side. A helical membrane pass occupies residues 527–547 (SGFFWGGFCLATLAWAVVDLP). Over 548–614 (ETAGRTFIEI…GRNTSSVVNK (67 aa)) the chain is Cytoplasmic. Positions 595–614 (EDLETSVVDEGRNTSSVVNK) are disordered.

This sequence belongs to the major facilitator superfamily. Sugar transporter (TC 2.A.1.1) family.

The protein resides in the membrane. Functionally, high-affinity uptake of maltose and maltotriose. Also transports turanose but not alpha-methylglucoside, melezitose or trehalose. The chain is Maltose permease MAL31 (MAL31) from Saccharomyces cerevisiae (strain ATCC 204508 / S288c) (Baker's yeast).